We begin with the raw amino-acid sequence, 700 residues long: Glutamine synthetase (700 aa).

The GS beta-grasp domain occupies 65–155 (YHFTPPGSSP…LPTAFCSYGG (91 aa)). The GS catalytic domain maps to 159–589 (DRDSLLRSME…TMQEMIRKDL (431 aa)). Mg(2+) is bound by residues glutamate 196, glutamate 198, glutamate 267, and glutamate 274. L-glutamate-binding positions include 318–319 (NG) and glycine 319. Histidine 323 provides a ligand contact to Mg(2+). The ATP site is built by serine 327 and arginine 435. Position 435 (arginine 435) interacts with L-glutamate. Glutamate 472 is a binding site for Mg(2+).

This sequence belongs to the glutamine synthetase family. Homohexamer. Requires Mg(2+) as cofactor.

It localises to the cytoplasm. It carries out the reaction L-glutamate + NH4(+) + ATP = L-glutamine + ADP + phosphate + H(+). With respect to regulation, the activity of this enzyme is not controlled by adenylation. Catalyzes the ATP-dependent biosynthesis of glutamine from glutamate and ammonia. This Butyrivibrio fibrisolvens protein is Glutamine synthetase.